A 344-amino-acid chain; its full sequence is uncharacterized protein (344 aa).

Belongs to the glycosyltransferase 2 family.

Functionally, may be involved in the production of the exopolysaccharide (EPS) component of the extracellular matrix during biofilm formation. EPS is responsible for the adhesion of chains of cells into bundles. This is an uncharacterized protein from Bacillus subtilis (strain 168).